The primary structure comprises 504 residues: Activin receptor type-1 (504 aa).

The first 16 residues, 1 to 16 (MALPVLLLLLALPSRS), serve as a signal peptide directing secretion. Residues 17-119 (VQDEELKLNE…EAAGYSMETL (103 aa)) are Extracellular-facing. Asn94 is a glycosylation site (N-linked (GlcNAc...) asparagine). The helical transmembrane segment at 120–140 (IIVILAPVVVLVIFSVVAVLI) threads the bilayer. The Cytoplasmic segment spans residues 141 to 504 (IRRIQKNHME…NSLDKLKADC (364 aa)). Positions 173 to 202 (STLADLLDHSCTSGSGSGLPFLVQRTVARQ) constitute a GS domain. Positions 203–497 (ITLVECVGKG…KTLTKIDNSL (295 aa)) constitute a Protein kinase domain. ATP is bound by residues 209 to 217 (VGKGRYGEV) and Lys230. The Proton acceptor role is filled by Asp331.

The protein belongs to the protein kinase superfamily. TKL Ser/Thr protein kinase family. TGFB receptor subfamily. Mg(2+) is required as a cofactor. Requires Mn(2+) as cofactor.

Its subcellular location is the membrane. It carries out the reaction L-threonyl-[receptor-protein] + ATP = O-phospho-L-threonyl-[receptor-protein] + ADP + H(+). The enzyme catalyses L-seryl-[receptor-protein] + ATP = O-phospho-L-seryl-[receptor-protein] + ADP + H(+). Functionally, on ligand binding, forms a receptor complex consisting of two type II and two type I transmembrane serine/threonine kinases. Type II receptors phosphorylate and activate type I receptors which autophosphorylate, then bind and activate SMAD transcriptional regulators. Receptor for activin. This Gallus gallus (Chicken) protein is Activin receptor type-1 (ACVR1).